The chain runs to 480 residues: Radical SAM Nalpha-GlyT isomerase (480 aa).

Residues cysteine 125, cysteine 129, and cysteine 132 each contribute to the iron-sulfur cluster site. Positions 457–480 are disordered; sequence KIVEPTPPEEDGGERKIIPITQID.

The enzyme catalyses 5-N(alpha)-glycyl-dTMP in DNA + AH2 + S-adenosyl-L-methionine = 5-C(alpha)-glycyl-dTMP in DNA + 5'-deoxyadenosine + L-methionine + A + H(+). Functionally, isomerizes 5-N-alpha-glycinylthymidine (Nalpha-GlyT) into 5-Calpha-glycinylthymidine (Calpha-GlyT) as a step in the pathway leading to thymidine hypermodifications in the viral genome. As a final result of the pathway of hypermodification, 5-aminoethyl-2'-deoxyuridine (5-NedU) substitutes for about 30% of thymidines in the viral DNA. These modifications probably prevent degradation of viral genome by the host restriction-modification antiviral defense system. This chain is Radical SAM Nalpha-GlyT isomerase, found in Pseudomonas phage M6.